The chain runs to 192 residues: Peptide deformylase (192 aa).

Residues C108 and H150 each coordinate Fe cation. E151 is an active-site residue. H154 lines the Fe cation pocket.

This sequence belongs to the polypeptide deformylase family. The cofactor is Fe(2+).

The enzyme catalyses N-terminal N-formyl-L-methionyl-[peptide] + H2O = N-terminal L-methionyl-[peptide] + formate. Its function is as follows. Removes the formyl group from the N-terminal Met of newly synthesized proteins. Requires at least a dipeptide for an efficient rate of reaction. N-terminal L-methionine is a prerequisite for activity but the enzyme has broad specificity at other positions. This chain is Peptide deformylase, found in Opitutus terrae (strain DSM 11246 / JCM 15787 / PB90-1).